The following is a 373-amino-acid chain: P2Y purinoceptor 1 (373 aa).

Residues 1-51 (MTEVPWSVVPNGTDAAFLAGLGSLWGNSTVASTAAVSSSFQCALTKTGFQF) lie on the Extracellular side of the membrane. N-linked (GlcNAc...) asparagine glycosylation is found at Asn-11 and Asn-27. Cystine bridges form between Cys-42-Cys-296 and Cys-124-Cys-202. Lys-46 contacts ADP. A helical transmembrane segment spans residues 52–74 (YYLPAVYILVFIIGFLGNSVAIW). Residues 75–87 (MFVFHMKPWSGIS) lie on the Cytoplasmic side of the membrane. A helical membrane pass occupies residues 88–109 (VYMFNLALADFLYVLTLPALIF). At 110–125 (YYFNKTDWIFGDAMCK) the chain is on the extracellular side. N-linked (GlcNAc...) asparagine glycosylation occurs at Asn-113. A helical transmembrane segment spans residues 126–147 (LQRFIFHVNLYGSILFLTCISA). Over 148 to 166 (HRYSGVVYPLKSLGRLKKK) the chain is Cytoplasmic. A helical membrane pass occupies residues 167–188 (NAIYVSVLVWLIVVVAISPILF). The Extracellular portion of the chain corresponds to 189–214 (YSGTGTRKNKTVTCYDTTSNDYLRSY). Asn-197 is a glycosylation site (N-linked (GlcNAc...) asparagine). Residue 203-205 (YDT) participates in ADP binding. The chain crosses the membrane as a helical span at residues 215 to 237 (FIYSMCTTVAMFCIPLVLILGCY). Over 238–260 (GLIVKALIYNDLDNSPLRRKSIY) the chain is Cytoplasmic. A helical transmembrane segment spans residues 261–284 (LVIIVLTVFAVSYIPFHVMKTMNL). ADP contacts are provided by residues 283 to 287 (NLRAR), 303 to 306 (YATY), and Arg-310. Residues 285–303 (RARLDFQTPEMCDFNDRVY) are Extracellular-facing. Residues 304 to 325 (ATYQVTRGLASLNSCVDPILYF) traverse the membrane as a helical segment. The Cytoplasmic segment spans residues 326-373 (LAGDTFRRRLSRATRKASRRSEANLQSKSEEMTLNILSEFKQNGDTSL).

Belongs to the G-protein coupled receptor 1 family.

It is found in the cell membrane. Functionally, receptor for extracellular adenine nucleotides such as ADP. In platelets, binding to ADP leads to mobilization of intracellular calcium ions via activation of phospholipase C, a change in platelet shape, and ultimately platelet aggregation. The protein is P2Y purinoceptor 1 (P2ry1) of Mus musculus (Mouse).